A 706-amino-acid polypeptide reads, in one-letter code: Probable N(6)-adenosine-methyltransferase MT-A70-like (706 aa).

Disordered regions lie at residues 64–114 (RPFV…VAAA) and 223–261 (TLPL…PDMW). Over residues 103–114 (SPGSSPASVAAA) the composition is skewed to low complexity. The segment covering 227-236 (LQPPPAPQMP) has biased composition (pro residues). S-adenosyl-L-methionine contacts are provided by residues 479–480 (DI) and Asp-497. Residues 567–580 (RIIRTGRTGHWLNH) are positively charged region required for RNA-binding. S-adenosyl-L-methionine contacts are provided by residues Lys-614, 637-640 (RMHN), and 650-651 (NQ). The segment at 669–706 (AYPDSEVQPPSPPRASAPIDGDQGTSQKPTVSDGERPA) is disordered.

It belongs to the MT-A70-like family.

Its subcellular location is the nucleus. The enzyme catalyses an adenosine in mRNA + S-adenosyl-L-methionine = an N(6)-methyladenosine in mRNA + S-adenosyl-L-homocysteine + H(+). In terms of biological role, probable N6-methyltransferase that methylates adenosine residues of some mRNAs. N6-methyladenosine (m6A), which is present at internal sites of some mRNAs, may play a role in the efficiency of mRNA splicing, transport or translation. This chain is Probable N(6)-adenosine-methyltransferase MT-A70-like, found in Oryza sativa subsp. japonica (Rice).